Consider the following 332-residue polypeptide: Adenosine receptor A2b (332 aa).

At 1 to 8 (MLLETQDA) the chain is on the extracellular side. The chain crosses the membrane as a helical span at residues 9-33 (LYVALELVIAALSVAGNVLVCAAVG). Over 34–43 (TANTLQTPTN) the chain is Cytoplasmic. A helical transmembrane segment spans residues 44–67 (YFLVSLAAADVAVGLFAIPFAITI). Topologically, residues 68–78 (SLGFCTDFYGC) are extracellular. Cys-78 and Cys-171 are disulfide-bonded. Residues 79-101 (LFLACFVLVLTQSSIFSLLAVAV) traverse the membrane as a helical segment. The Cytoplasmic portion of the chain corresponds to 102-121 (DRYLAICVPLRYKSLVTGTR). Residues 122–144 (ARGVIAVLWVLAFGIGLTPFLGW) form a helical membrane-spanning segment. The Extracellular portion of the chain corresponds to 145–178 (NSKDSATNNCTEPWDGTTNESCCLVKCLFENVVP). Asn-153 and Asn-163 each carry an N-linked (GlcNAc...) asparagine glycan. Glu-174 is a binding site for adenosine. Residues 179 to 203 (MSYMVYFNFFGCVLPPLLIMLVIYI) traverse the membrane as a helical segment. The Cytoplasmic segment spans residues 204-235 (KIFLVACRQLQRTELMDHSRTTLQREIHAAKS). Residues 236 to 259 (LAMIVGIFALCWLPVHAVNCVTLF) traverse the membrane as a helical segment. Asn-254 lines the adenosine pocket. Residues 260–267 (QPAQGKNK) are Extracellular-facing. Residues 268-291 (PKWAMNMAILLSHANSVVNPIVYA) form a helical membrane-spanning segment. Residues Ser-279 and His-280 each coordinate adenosine. Residues 292-332 (YRNRDFRYTFHKIISRYLLCQADVKSGNGQAGVQPALGVGL) are Cytoplasmic-facing. Cys-311 is lipidated: S-palmitoyl cysteine.

It belongs to the G-protein coupled receptor 1 family.

The protein localises to the cell membrane. Its function is as follows. Receptor for adenosine. The activity of this receptor is mediated by G proteins which activate adenylyl cyclase. This chain is Adenosine receptor A2b (ADORA2B), found in Homo sapiens (Human).